Consider the following 486-residue polypeptide: Wax ester synthase/diacylglycerol acyltransferase 11 (486 aa).

Over 1 to 192 (MGEDKKTARE…CNSGFFNKIW (192 aa)) the chain is Cytoplasmic. Histidine 144 functions as the Proton acceptor in the catalytic mechanism. Residues 193 to 213 (WLFVGLWFILRLLFNTFVDIL) form a helical membrane-spanning segment. The Extracellular segment spans residues 214–486 (MFALTIFVLR…LERGLYEIEV (273 aa)).

This sequence in the N-terminal section; belongs to the long-chain O-acyltransferase family. Mostly expressed in inflorescences and flowers, especially at the periphery of petal epidermal cells.

Its subcellular location is the cell membrane. It localises to the endoplasmic reticulum membrane. It carries out the reaction an acyl-CoA + a 1,2-diacyl-sn-glycerol = a triacyl-sn-glycerol + CoA. The catalysed reaction is a long chain fatty alcohol + a fatty acyl-CoA = a wax ester + CoA. The protein operates within glycerolipid metabolism; triacylglycerol biosynthesis. It participates in lipid metabolism. In terms of biological role, bifunctional wax ester synthase/diacylglycerol acyltransferase. Involved in cuticular wax biosynthesis. Required for petals development, probably by mediating the production of fatty acids at the plasma membrane in the petal epidermis acting as lubricants that makes petal elongation smooth in narrow space between the sepals and the anthers inside floral buds. The sequence is that of Wax ester synthase/diacylglycerol acyltransferase 11 from Arabidopsis thaliana (Mouse-ear cress).